A 178-amino-acid chain; its full sequence is ATP-dependent protease subunit HslV (178 aa).

Thr7 is a catalytic residue. Residues Gly162, Cys165, and Thr168 each contribute to the Na(+) site.

It belongs to the peptidase T1B family. HslV subfamily. A double ring-shaped homohexamer of HslV is capped on each side by a ring-shaped HslU homohexamer. The assembly of the HslU/HslV complex is dependent on binding of ATP.

The protein localises to the cytoplasm. The enzyme catalyses ATP-dependent cleavage of peptide bonds with broad specificity.. With respect to regulation, allosterically activated by HslU binding. Functionally, protease subunit of a proteasome-like degradation complex believed to be a general protein degrading machinery. The chain is ATP-dependent protease subunit HslV from Paraburkholderia phymatum (strain DSM 17167 / CIP 108236 / LMG 21445 / STM815) (Burkholderia phymatum).